Here is a 201-residue protein sequence, read N- to C-terminus: MEWVWALVLLAALGSGRGERDCRVSSFRVKENFDKARFAGTWYAMAKKDPEGLFLQDNIVAEFSVDENGHMSATAKGRVRLLNNWDVCADMVGTFTDTEDPAKFKMKYWGVASFLQRGNDDHWIIDTDYDTFAVQYSCRLLNFDGTCADSYSFVFSRDPHGLPPDVQKLVRQRQEELCLSRQYRLIVHNGYCDDKSVRNLL.

The first 18 residues, 1–18 (MEWVWALVLLAALGSGRG), serve as a signal peptide directing secretion. Intrachain disulfides connect C22-C178, C88-C192, and C138-C147. A substrate-binding site is contributed by Q116. The residue at position 139 (R139) is an Omega-N-methylarginine.

This sequence belongs to the calycin superfamily. Lipocalin family. As to quaternary structure, interacts with TTR. Interaction with TTR prevents its loss by filtration through the kidney glomeruli. Interacts with STRA6.

It is found in the secreted. Retinol-binding protein that mediates retinol transport in blood plasma. Delivers retinol from the liver stores to the peripheral tissues. Transfers the bound all-trans retinol to STRA6, that then facilitates retinol transport across the cell membrane. The chain is Retinol-binding protein 4 (RBP4) from Oryctolagus cuniculus (Rabbit).